The sequence spans 337 residues: ATP-dependent 6-phosphofructokinase (337 aa).

Residue glycine 11 coordinates ATP. 21–25 (RAVVR) is an ADP binding site. ATP is bound by residues 72–73 (RY) and 102–105 (GDGS). Aspartate 103 lines the Mg(2+) pocket. 125–127 (TID) serves as a coordination point for substrate. Aspartate 127 (proton acceptor) is an active-site residue. Arginine 154 serves as a coordination point for ADP. Residues arginine 162 and 169–171 (MGR) each bind substrate. ADP contacts are provided by residues 185–187 (GAD), arginine 212, and 214–216 (KNH). Substrate is bound by residues glutamate 223, arginine 245, and 251 to 254 (HILR).

Belongs to the phosphofructokinase type A (PFKA) family. ATP-dependent PFK group I subfamily. Prokaryotic clade 'B1' sub-subfamily. In terms of assembly, homotetramer. Mg(2+) serves as cofactor.

The protein resides in the cytoplasm. The catalysed reaction is beta-D-fructose 6-phosphate + ATP = beta-D-fructose 1,6-bisphosphate + ADP + H(+). It functions in the pathway carbohydrate degradation; glycolysis; D-glyceraldehyde 3-phosphate and glycerone phosphate from D-glucose: step 3/4. With respect to regulation, allosterically activated by ADP and other diphosphonucleosides, and allosterically inhibited by phosphoenolpyruvate. Catalyzes the phosphorylation of D-fructose 6-phosphate to fructose 1,6-bisphosphate by ATP, the first committing step of glycolysis. The polypeptide is ATP-dependent 6-phosphofructokinase (Streptococcus equi subsp. zooepidemicus (strain H70)).